The following is a 397-amino-acid chain: MNAGSDPVVIVSAARTIIGSFNGALAAVPVQDLGSTVIKEVLKRATVAPEDVSEVIFGHVLAAGCGQNPVRQASVGAGIPYSVPAWSCQMICGSGLKAVCLAVQSIGIGDSSIVVAGGMENMSKAPHLAYLRTGVKIGEMPLTDSILCDGLTDAFHNCHMGITAENVAKKWQVSREDQDKVAVLSQNRTENAQKAGHFDKEIVPVLVSTRKGLIEVKTDEFPRHGSNIEAMSKLKPYFLTDGTGTVTPANASGINDGAAAVVLMKKSEADKRGLTPLARIVSWSQVGVEPSIMGIGPIPAIKQAVTKAGWSLEDVDIFEINEAFAAVSAAIVKELGLNPEKVNIEGGAIALGHPLGASGCRILVTLLHTLERMGRSRGVAALCIGGGMGIAMCVQRE.

Met-1 carries the N-acetylmethionine modification. Cys-92 serves as the catalytic Acyl-thioester intermediate. Lys-200 carries the N6-acetyllysine modification. Positions 223 and 226 each coordinate CoA. An N6-acetyllysine mark is found at Lys-233 and Lys-235. Ser-252 is a binding site for CoA. Cys-383 functions as the Proton donor/acceptor in the catalytic mechanism.

This sequence belongs to the thiolase-like superfamily. Thiolase family. In terms of assembly, homotetramer.

Its subcellular location is the cytoplasm. The protein resides in the cytosol. It carries out the reaction 2 acetyl-CoA = acetoacetyl-CoA + CoA. It functions in the pathway lipid metabolism; fatty acid metabolism. Its function is as follows. Involved in the biosynthetic pathway of cholesterol. The chain is Acetyl-CoA acetyltransferase, cytosolic (ACAT2) from Homo sapiens (Human).